The chain runs to 64 residues: SPbeta prophage-derived uncharacterized protein YosJ (64 aa).

This is SPbeta prophage-derived uncharacterized protein YosJ (yosJ) from Bacillus subtilis (strain 168).